We begin with the raw amino-acid sequence, 119 residues long: Large ribosomal subunit protein bL20 (119 aa).

It belongs to the bacterial ribosomal protein bL20 family.

Binds directly to 23S ribosomal RNA and is necessary for the in vitro assembly process of the 50S ribosomal subunit. It is not involved in the protein synthesizing functions of that subunit. This chain is Large ribosomal subunit protein bL20, found in Streptococcus pneumoniae serotype 2 (strain D39 / NCTC 7466).